The chain runs to 453 residues: GTPase Der (453 aa).

EngA-type G domains follow at residues 3 to 167 and 187 to 360; these read FTLA…PAQT and IKVA…AVWN. GTP contacts are provided by residues 9 to 16, 56 to 60, 119 to 122, 193 to 200, 240 to 244, and 305 to 308; these read GRPNVGKS, DTAGL, NKSE, GRPNAGKS, and NKSD. The 85-residue stretch at 361-445 folds into the KH-like domain; the sequence is TRIPTNPLNR…PIRLTLREKG (85 aa).

It belongs to the TRAFAC class TrmE-Era-EngA-EngB-Septin-like GTPase superfamily. EngA (Der) GTPase family. As to quaternary structure, associates with the 50S ribosomal subunit.

Its function is as follows. GTPase that plays an essential role in the late steps of ribosome biogenesis. In Azorhizobium caulinodans (strain ATCC 43989 / DSM 5975 / JCM 20966 / LMG 6465 / NBRC 14845 / NCIMB 13405 / ORS 571), this protein is GTPase Der.